We begin with the raw amino-acid sequence, 524 residues long: 11-oxo-beta-amyrin 30-oxidase (524 aa).

A helical membrane pass occupies residues 9 to 29 (GTTVIISVLSVLLAVIPWYLL). Cys472 is a binding site for heme.

This sequence belongs to the cytochrome P450 family. Heme serves as cofactor. Expressed in flowers. Detected in roots upon salt treatment.

It localises to the membrane. The enzyme catalyses 11-oxo-beta-amyrin + 3 reduced [NADPH--hemoprotein reductase] + 3 O2 = glycyrrhetinate + 3 oxidized [NADPH--hemoprotein reductase] + 4 H2O + 4 H(+). Its function is as follows. Involved in the biosynthesis of triterpenoid saponins. Catalyzes three sequential oxidation steps at C-30 of 11-oxo-beta-amyrin. Also able to catalyze sequential C-30 hydroxylation of beta-amyrin to produce 30-hydroxy-beta-amyrin and 11-deoxoglycyrrhetinic acid. This is 11-oxo-beta-amyrin 30-oxidase (CYP72A63) from Medicago truncatula (Barrel medic).